Here is a 180-residue protein sequence, read N- to C-terminus: CASP-like protein XL3 (180 aa).

The Cytoplasmic portion of the chain corresponds to 1 to 7; it reads MELSIQK. A helical transmembrane segment spans residues 8–28; the sequence is IEALIRLSTIVMLVLTACLIG. Topologically, residues 29–49 are extracellular; it reads LDSQTKVIFYVQKKASFKDLR. Residues 50 to 70 traverse the membrane as a helical segment; sequence ALVGLLYITSLAAAYNLLQLC. The Cytoplasmic segment spans residues 71 to 98; the sequence is CSSFSASYKGTSLQSYAYLAWLRYILDQ. Residues 99 to 119 form a helical membrane-spanning segment; it reads AVVYAVFAGNLAALEHSFLVL. Topologically, residues 120 to 140 are extracellular; sequence TGEENFQWLKWCNKYTRFCTQ. A helical transmembrane segment spans residues 141 to 161; it reads IGGSLLCGFVASLLMFSIASI. At 162–180 the chain is on the cytoplasmic side; it reads SAFNLFRQYSPTKFMHLKL.

Belongs to the Casparian strip membrane proteins (CASP) family. Homodimer and heterodimers.

The protein localises to the cell membrane. This Gossypium hirsutum (Upland cotton) protein is CASP-like protein XL3 (XL3).